We begin with the raw amino-acid sequence, 242 residues long: Ribonuclease 3 (242 aa).

The region spanning 18–146 (APAIEAKLGY…IIGAIYLDGG (129 aa)) is the RNase III domain. Mg(2+) is bound at residue Glu59. Residue Asp63 is part of the active site. Positions 132 and 135 each coordinate Mg(2+). Glu135 is an active-site residue. A DRBM domain is found at 172 to 241 (NWKALLQDYC…AADALSRVEL (70 aa)). The segment covering 218 to 227 (RGKGTSKKEA) has biased composition (basic and acidic residues). The interval 218-242 (RGKGTSKKEAQQAAAADALSRVELP) is disordered.

This sequence belongs to the ribonuclease III family. In terms of assembly, homodimer. It depends on Mg(2+) as a cofactor.

The protein resides in the cytoplasm. It catalyses the reaction Endonucleolytic cleavage to 5'-phosphomonoester.. In terms of biological role, digests double-stranded RNA. Involved in the processing of primary rRNA transcript to yield the immediate precursors to the large and small rRNAs (23S and 16S). Processes some mRNAs, and tRNAs when they are encoded in the rRNA operon. Processes pre-crRNA and tracrRNA of type II CRISPR loci if present in the organism. The sequence is that of Ribonuclease 3 from Protochlamydia amoebophila (strain UWE25).